A 479-amino-acid polypeptide reads, in one-letter code: Cardiolipin synthase A (479 aa).

A run of 2 helical transmembrane segments spans residues isoleucine 8–valine 28 and isoleucine 38–phenylalanine 58. PLD phosphodiesterase domains follow at residues valine 218–tyrosine 245 and glutamine 392–serine 419. Catalysis depends on residues histidine 223, lysine 225, aspartate 230, histidine 397, lysine 399, and aspartate 404.

It belongs to the phospholipase D family. Cardiolipin synthase subfamily. ClsA sub-subfamily.

It localises to the cell inner membrane. The catalysed reaction is 2 a 1,2-diacyl-sn-glycero-3-phospho-(1'-sn-glycerol) = a cardiolipin + glycerol. Its function is as follows. Catalyzes the reversible phosphatidyl group transfer from one phosphatidylglycerol molecule to another to form cardiolipin (CL) (diphosphatidylglycerol) and glycerol. This is Cardiolipin synthase A from Pseudomonas fluorescens (strain ATCC BAA-477 / NRRL B-23932 / Pf-5).